A 27-amino-acid polypeptide reads, in one-letter code: L-amino-acid oxidase (27 aa).

In terms of assembly, homodimer; non-covalently linked. The cofactor is FAD. Post-translationally, contains 2 disulfide bonds. In terms of processing, N-glycosylated. As to expression, expressed by the venom gland.

It localises to the secreted. It carries out the reaction an L-alpha-amino acid + O2 + H2O = a 2-oxocarboxylate + H2O2 + NH4(+). The catalysed reaction is L-leucine + O2 + H2O = 4-methyl-2-oxopentanoate + H2O2 + NH4(+). Catalyzes an oxidative deamination of predominantly hydrophobic and aromatic L-amino acids, thus producing hydrogen peroxide that may contribute to the diverse toxic effects of this enzyme. Shows activity on L-Leu. Exhibits diverse biological activities, such as hemolysis, edema, apoptosis, as well as induction of platelet aggregation. Effects of snake L-amino oxidases on platelets are controversial, since they either induce aggregation or inhibit agonist-induced aggregation. These different effects are probably due to different experimental conditions. Unlike other snake venom L-amino acid oxidases, does not induce hemorrhage. This protein may also have antibacterial and antiparasitic activities. The polypeptide is L-amino-acid oxidase (Eristicophis macmahoni (Leaf-nosed viper)).